An 85-amino-acid polypeptide reads, in one-letter code: Large ribosomal subunit protein bL27 (85 aa).

The protein belongs to the bacterial ribosomal protein bL27 family.

This Campylobacter curvus (strain 525.92) protein is Large ribosomal subunit protein bL27.